Consider the following 426-residue polypeptide: Gamma-glutamylputrescine oxidoreductase (426 aa).

This sequence belongs to the gamma-glutamylputrescine oxidoreductase family.

The enzyme catalyses gamma-L-glutamylputrescine + O2 + H2O = 4-(gamma-L-glutamylamino)butanal + H2O2 + NH4(+). It functions in the pathway amine and polyamine degradation; putrescine degradation; 4-aminobutanoate from putrescine: step 2/4. Functionally, involved in the breakdown of putrescine via the oxidation of L-glutamylputrescine. The polypeptide is Gamma-glutamylputrescine oxidoreductase (puuB) (Escherichia coli (strain K12)).